The sequence spans 397 residues: Urea transporter 2 (397 aa).

Transmembrane regions (helical) follow at residues 68-85 (VMFV…IGLF), 92-109 (AIAG…ALIL), 115-135 (AIAS…IAVF), 143-163 (WWLL…SSAL), and 172-192 (LPVF…ATGH). Asn-210 is a glycosylation site (N-linked (GlcNAc...) asparagine). Helical transmembrane passes span 239-257 (WTGG…LICL), 264-280 (TMGM…FDSI), 287-303 (FNST…FYVI), 309-329 (LLAV…TNVL), and 331-351 (VFGL…FLLL).

Belongs to the urea transporter family. Kidney.

Its subcellular location is the apical cell membrane. The protein resides in the basolateral cell membrane. The catalysed reaction is urea(in) = urea(out). Its activity is regulated as follows. Inhibited by urea analogs and phloretin. Functionally, mediates the transport of urea driven by a concentration gradient across the cell membrane of the renal inner medullary collecting duct which is critical to the urinary concentrating mechanism. The chain is Urea transporter 2 (SLC14A2) from Oryctolagus cuniculus (Rabbit).